We begin with the raw amino-acid sequence, 172 residues long: 3-phenylpropionate/cinnamic acid dioxygenase subunit beta (172 aa).

It belongs to the bacterial ring-hydroxylating dioxygenase beta subunit family. This dioxygenase system consists of four proteins: the two subunits of the hydroxylase component (HcaE and HcaF), a ferredoxin (HcaC) and a ferredoxin reductase (HcaD).

The catalysed reaction is 3-phenylpropanoate + NADH + O2 + H(+) = 3-(cis-5,6-dihydroxycyclohexa-1,3-dien-1-yl)propanoate + NAD(+). The enzyme catalyses (E)-cinnamate + NADH + O2 + H(+) = (2E)-3-(cis-5,6-dihydroxycyclohexa-1,3-dien-1-yl)prop-2-enoate + NAD(+). The protein operates within aromatic compound metabolism; 3-phenylpropanoate degradation. Its function is as follows. Part of the multicomponent 3-phenylpropionate dioxygenase. Converts 3-phenylpropionic acid (PP) and cinnamic acid (CI) into 3-phenylpropionate-dihydrodiol (PP-dihydrodiol) and cinnamic acid-dihydrodiol (CI-dihydrodiol), respectively. The protein is 3-phenylpropionate/cinnamic acid dioxygenase subunit beta of Escherichia coli O7:K1 (strain IAI39 / ExPEC).